Here is a 235-residue protein sequence, read N- to C-terminus: Phosphoribosylaminoimidazole-succinocarboxamide synthase (235 aa).

The protein belongs to the SAICAR synthetase family.

The enzyme catalyses 5-amino-1-(5-phospho-D-ribosyl)imidazole-4-carboxylate + L-aspartate + ATP = (2S)-2-[5-amino-1-(5-phospho-beta-D-ribosyl)imidazole-4-carboxamido]succinate + ADP + phosphate + 2 H(+). It participates in purine metabolism; IMP biosynthesis via de novo pathway; 5-amino-1-(5-phospho-D-ribosyl)imidazole-4-carboxamide from 5-amino-1-(5-phospho-D-ribosyl)imidazole-4-carboxylate: step 1/2. The protein is Phosphoribosylaminoimidazole-succinocarboxamide synthase (purC) of Streptococcus pneumoniae serotype 4 (strain ATCC BAA-334 / TIGR4).